The primary structure comprises 367 residues: NADH-quinone oxidoreductase subunit D (367 aa).

It belongs to the complex I 49 kDa subunit family. As to quaternary structure, NDH-1 is composed of 14 different subunits. Subunits NuoB, C, D, E, F, and G constitute the peripheral sector of the complex.

Its subcellular location is the cell inner membrane. It carries out the reaction a quinone + NADH + 5 H(+)(in) = a quinol + NAD(+) + 4 H(+)(out). NDH-1 shuttles electrons from NADH, via FMN and iron-sulfur (Fe-S) centers, to quinones in the respiratory chain. The immediate electron acceptor for the enzyme in this species is believed to be ubiquinone. Couples the redox reaction to proton translocation (for every two electrons transferred, four hydrogen ions are translocated across the cytoplasmic membrane), and thus conserves the redox energy in a proton gradient. The sequence is that of NADH-quinone oxidoreductase subunit D from Thermosipho melanesiensis (strain DSM 12029 / CIP 104789 / BI429).